Consider the following 53-residue polypeptide: uncharacterized protein (53 aa).

The helical transmembrane segment at 28 to 45 (AIVFSLAVFGIVEAYYYW) threads the bilayer.

The protein localises to the host membrane. This is an uncharacterized protein from Acidianus convivator (ABV).